Reading from the N-terminus, the 760-residue chain is 5-methyltetrahydropteroyltriglutamate--homocysteine methyltransferase (760 aa).

Residues 24–27 (RELK) and lysine 118 contribute to the 5-methyltetrahydropteroyltri-L-glutamate site. L-homocysteine contacts are provided by residues 437-439 (IGS) and glutamate 490. Residues 437–439 (IGS) and glutamate 490 contribute to the L-methionine site. 5-methyltetrahydropteroyltri-L-glutamate contacts are provided by residues 521 to 522 (RC) and tryptophan 567. Aspartate 605 is a binding site for L-homocysteine. Residue aspartate 605 participates in L-methionine binding. Glutamate 611 serves as a coordination point for 5-methyltetrahydropteroyltri-L-glutamate. 3 residues coordinate Zn(2+): histidine 647, cysteine 649, and glutamate 671. Histidine 700 (proton donor) is an active-site residue. Residue cysteine 732 participates in Zn(2+) binding.

This sequence belongs to the vitamin-B12 independent methionine synthase family. Zn(2+) serves as cofactor.

The enzyme catalyses 5-methyltetrahydropteroyltri-L-glutamate + L-homocysteine = tetrahydropteroyltri-L-glutamate + L-methionine. It functions in the pathway amino-acid biosynthesis; L-methionine biosynthesis via de novo pathway; L-methionine from L-homocysteine (MetE route): step 1/1. Its function is as follows. Catalyzes the transfer of a methyl group from 5-methyltetrahydrofolate to homocysteine resulting in methionine formation. This is 5-methyltetrahydropteroyltriglutamate--homocysteine methyltransferase from Mycobacterium leprae (strain TN).